The following is a 60-amino-acid chain: Large ribosomal subunit protein uL30 (60 aa).

The protein belongs to the universal ribosomal protein uL30 family. In terms of assembly, part of the 50S ribosomal subunit.

In Staphylococcus epidermidis (strain ATCC 35984 / DSM 28319 / BCRC 17069 / CCUG 31568 / BM 3577 / RP62A), this protein is Large ribosomal subunit protein uL30.